We begin with the raw amino-acid sequence, 140 residues long: Nucleoside diphosphate kinase (140 aa).

K11, F59, R87, T93, R104, and N114 together coordinate ATP. Residue H117 is the Pros-phosphohistidine intermediate of the active site.

The protein belongs to the NDK family. As to quaternary structure, homotetramer. Mg(2+) serves as cofactor.

It is found in the cytoplasm. It carries out the reaction a 2'-deoxyribonucleoside 5'-diphosphate + ATP = a 2'-deoxyribonucleoside 5'-triphosphate + ADP. The catalysed reaction is a ribonucleoside 5'-diphosphate + ATP = a ribonucleoside 5'-triphosphate + ADP. In terms of biological role, major role in the synthesis of nucleoside triphosphates other than ATP. The ATP gamma phosphate is transferred to the NDP beta phosphate via a ping-pong mechanism, using a phosphorylated active-site intermediate. The protein is Nucleoside diphosphate kinase of Novosphingobium aromaticivorans (strain ATCC 700278 / DSM 12444 / CCUG 56034 / CIP 105152 / NBRC 16084 / F199).